Here is a 465-residue protein sequence, read N- to C-terminus: Adenosylhomocysteinase (465 aa).

Substrate-binding residues include T56, D131, and E191. Residue 192-194 (TTT) coordinates NAD(+). Positions 221 and 225 each coordinate substrate. Residues N226, 255-260 (GYGDVG), E278, N313, 334-336 (IGH), and N379 each bind NAD(+).

The protein belongs to the adenosylhomocysteinase family. Requires NAD(+) as cofactor.

It is found in the cytoplasm. The enzyme catalyses S-adenosyl-L-homocysteine + H2O = L-homocysteine + adenosine. It functions in the pathway amino-acid biosynthesis; L-homocysteine biosynthesis; L-homocysteine from S-adenosyl-L-homocysteine: step 1/1. Functionally, may play a key role in the regulation of the intracellular concentration of adenosylhomocysteine. This chain is Adenosylhomocysteinase, found in Chelativorans sp. (strain BNC1).